The primary structure comprises 300 residues: TLR adapter interacting with SLC15A4 on the lysosome (300 aa).

A pLxIS motif motif is present at residues 289 to 293 (SLHIS). At S293 the chain carries Phosphoserine.

In terms of assembly, interacts (via pLxIS motif) with IRF5; leading to IRF5 activation. Interacts with SLC15A4; leading to its recruitment to endolysosome. In terms of processing, the phosphorylated pLxIS motif constitutes an IRF5-binding motif, leading to recruitment of the transcription factor IRF5 to induce type-I interferons and other cytokines.

Its subcellular location is the lysosome membrane. The protein localises to the endosome membrane. It localises to the nucleus. It is found in the cytoplasm. Functionally, innate immune adapter that mediates the recruitment and activation of IRF5 downstream of endolysosomal toll-like receptors TLR7, TLR8 and TLR9. Following recruitment to endolysosome by SLC15A4 downstream of TLR7, TLR8 and TLR9, specifically recruits IRF5 transcription factor via its pLxIS motif, leading to IRF5 activation and subsequent expression of type I interferons. Plays a role in the regulation of endolysosomal pH in immune cells such as B-cells, dendritic cells and monocytes. This is TLR adapter interacting with SLC15A4 on the lysosome from Bos taurus (Bovine).